A 386-amino-acid chain; its full sequence is Methionine import ATP-binding protein MetN 2 (386 aa).

One can recognise an ABC transporter domain in the interval 32 to 272; it reads VIFDDVGKVF…PQHDATRALL (241 aa). 69-76 lines the ATP pocket; that stretch reads GRSGAGKS.

The protein belongs to the ABC transporter superfamily. Methionine importer (TC 3.A.1.24) family. The complex is composed of two ATP-binding proteins (MetN), two transmembrane proteins (MetI) and a solute-binding protein (MetQ).

The protein localises to the cell inner membrane. It catalyses the reaction L-methionine(out) + ATP + H2O = L-methionine(in) + ADP + phosphate + H(+). It carries out the reaction D-methionine(out) + ATP + H2O = D-methionine(in) + ADP + phosphate + H(+). Functionally, part of the ABC transporter complex MetNIQ involved in methionine import. Responsible for energy coupling to the transport system. This is Methionine import ATP-binding protein MetN 2 from Paraburkholderia xenovorans (strain LB400).